We begin with the raw amino-acid sequence, 897 residues long: Protein SAP1 (897 aa).

Disordered regions lie at residues 112–144 (EEPA…PVFQ), 195–219 (PSKP…PPLK), 302–398 (QMSD…TKST), 413–438 (SKSN…PNSV), and 456–561 (KKVA…REEP). Residues 120 to 137 (MPSSKTYTNHSSSFTRST) show a composition bias toward polar residues. Basic and acidic residues predominate over residues 209–219 (NPIEHNDPPLK). A compositionally biased stretch (low complexity) spans 307–321 (SVTSSTSSNKSVSSS). The segment covering 364–380 (LETSTTMDSSKIRNPQI) has biased composition (polar residues). The span at 468–478 (KKSHPILKSKT) shows a compositional bias: basic residues. Over residues 480-496 (KVPNSSSKKTSSHPSRP) the composition is skewed to low complexity. The span at 497 to 523 (VSNSKPYSHGASQNKKPSKNQTTSMSK) shows a compositional bias: polar residues. S536 carries the post-translational modification Phosphoserine. 645 to 652 (GPPGTGKT) lines the ATP pocket.

The protein belongs to the AAA ATPase family. Interacts with SPT2/SIN1.

The sequence is that of Protein SAP1 (SAP1) from Saccharomyces cerevisiae (strain ATCC 204508 / S288c) (Baker's yeast).